The chain runs to 272 residues: Putative phosphoenolpyruvate synthase regulatory protein (272 aa).

An ADP-binding site is contributed by 152-159; it reads GVSRCGKT.

The protein belongs to the pyruvate, phosphate/water dikinase regulatory protein family. PSRP subfamily.

It catalyses the reaction [pyruvate, water dikinase] + ADP = [pyruvate, water dikinase]-phosphate + AMP + H(+). The enzyme catalyses [pyruvate, water dikinase]-phosphate + phosphate + H(+) = [pyruvate, water dikinase] + diphosphate. Functionally, bifunctional serine/threonine kinase and phosphorylase involved in the regulation of the phosphoenolpyruvate synthase (PEPS) by catalyzing its phosphorylation/dephosphorylation. The chain is Putative phosphoenolpyruvate synthase regulatory protein from Pseudomonas fluorescens (strain Pf0-1).